Here is a 423-residue protein sequence, read N- to C-terminus: Sulfate adenylyltransferase (423 aa).

The protein belongs to the sulfate adenylyltransferase family.

The enzyme catalyses sulfate + ATP + H(+) = adenosine 5'-phosphosulfate + diphosphate. The protein operates within sulfur metabolism; hydrogen sulfide biosynthesis; sulfite from sulfate: step 1/3. The polypeptide is Sulfate adenylyltransferase (Desulfovibrio desulfuricans (strain ATCC 27774 / DSM 6949 / MB)).